The chain runs to 202 residues: GTP cyclohydrolase-2 (202 aa).

Residue 49–53 (RIHSE) coordinates GTP. Residues Cys-54, Cys-65, and Cys-67 each coordinate Zn(2+). Residues Gln-70, 92 to 94 (EGR), and Thr-114 contribute to the GTP site. Asp-126 serves as the catalytic Proton acceptor. Catalysis depends on Arg-128, which acts as the Nucleophile. Positions 149 and 154 each coordinate GTP.

The protein belongs to the GTP cyclohydrolase II family. Zn(2+) serves as cofactor.

The enzyme catalyses GTP + 4 H2O = 2,5-diamino-6-hydroxy-4-(5-phosphoribosylamino)-pyrimidine + formate + 2 phosphate + 3 H(+). Its pathway is cofactor biosynthesis; riboflavin biosynthesis; 5-amino-6-(D-ribitylamino)uracil from GTP: step 1/4. Functionally, catalyzes the conversion of GTP to 2,5-diamino-6-ribosylamino-4(3H)-pyrimidinone 5'-phosphate (DARP), formate and pyrophosphate. The protein is GTP cyclohydrolase-2 of Shewanella frigidimarina (strain NCIMB 400).